The sequence spans 300 residues: Delta(7)-sterol 5(6)-desaturase erg31 (300 aa).

3 consecutive transmembrane segments (helical) span residues 33–53 (ISLF…FASL), 78–98 (VLTA…WFLA), and 117–137 (YFLC…YWAH). The region spanning 123–248 (PLFVMFSDFG…FTTLFDRLGN (126 aa)) is the Fatty acid hydroxylase domain. The short motif at 137-141 (HRFLH) is the Histidine box-1 element. A Histidine box-2 motif is present at residues 150-154 (HKLHH). A helical membrane pass occupies residues 180–200 (HLFPFFFPLHKLTYLALFTFV). A Histidine box-3 motif is present at residues 225–229 (HNGHH).

Belongs to the sterol desaturase family. Requires Fe cation as cofactor.

The protein resides in the endoplasmic reticulum membrane. The catalysed reaction is episterol + 2 Fe(II)-[cytochrome b5] + O2 + 2 H(+) = 5-dehydroepisterol + 2 Fe(III)-[cytochrome b5] + 2 H2O. It participates in steroid metabolism; ergosterol biosynthesis. In terms of biological role, C-5 sterol desaturase; part of the third module of ergosterol biosynthesis pathway that includes by the late steps of the pathway. Erg31 and erg32 catalyze the introduction of a C-5 double bond in the B ring to produce 5-dehydroepisterol. The third module or late pathway involves the ergosterol synthesis itself through consecutive reactions that mainly occur in the endoplasmic reticulum (ER) membrane. Firstly, the squalene synthase erg9 catalyzes the condensation of 2 farnesyl pyrophosphate moieties to form squalene, which is the precursor of all steroids. Secondly, squalene is converted into lanosterol by the consecutive action of the squalene epoxidase erg1 and the lanosterol synthase erg7. The lanosterol 14-alpha-demethylase erg11/cyp1 catalyzes C14-demethylation of lanosterol to produce 4,4'-dimethyl cholesta-8,14,24-triene-3-beta-ol. In the next steps, a complex process involving various demethylation, reduction and desaturation reactions catalyzed by the C-14 reductase erg24 and the C-4 demethylation complex erg25-erg26-erg27 leads to the production of zymosterol. Erg28 likely functions in the C-4 demethylation complex reaction by tethering erg26 and Erg27 to the endoplasmic reticulum or to facilitate interaction between these proteins. Then, the sterol 24-C-methyltransferase erg6 catalyzes the methyl transfer from S-adenosyl-methionine to the C-24 of zymosterol to form fecosterol. The C-8 sterol isomerase erg2 catalyzes the reaction which results in unsaturation at C-7 in the B ring of sterols and thus converts fecosterol to episterol. The sterol-C5-desaturases erg31 and erg32 then catalyze the introduction of a C-5 double bond in the B ring to produce 5-dehydroepisterol. The C-22 sterol desaturase erg5 further converts 5-dehydroepisterol into ergosta-5,7,22,24(28)-tetraen-3beta-ol by forming the C-22(23) double bond in the sterol side chain. Finally, ergosta-5,7,22,24(28)-tetraen-3beta-ol is substrate of the C-24(28) sterol reductase erg4 to produce ergosterol. In the genus Schizosaccharomyces, a second route exists between lanosterol and fecosterol, via the methylation of lanosterol to eburicol by erg6, followed by C14-demethylation by erg11/cyp1 and C4-demethylation by the demethylation complex erg25-erg26-erg27. This chain is Delta(7)-sterol 5(6)-desaturase erg31, found in Schizosaccharomyces pombe (strain 972 / ATCC 24843) (Fission yeast).